The primary structure comprises 216 residues: GTP-binding nuclear protein Ran, testis-specific isoform (216 aa).

The residue at position 2 (alanine 2) is an N-acetylalanine. The Small GTPase Ran-type domain maps to 7–171 (PQIQFKLVLV…FWLARKLIGD (165 aa)). 17–24 (GDGGTGKT) is a GTP binding site. A Phosphothreonine modification is found at threonine 24. Residues 37-45 (KEYVATLGV) are switch-I. N6-acetyllysine is present on lysine 60. 65-69 (DTAGQ) lines the GTP pocket. The segment at 68–84 (GQEKFGGLRDGYYIQAQ) is switch-II. Lysine 71 is subject to N6-acetyllysine; alternate. A Glycyl lysine isopeptide (Lys-Gly) (interchain with G-Cter in SUMO2); alternate cross-link involves residue lysine 71. Residue lysine 71 forms a Glycyl lysine isopeptide (Lys-Gly) (interchain with G-Cter in ubiquitin); alternate linkage. Lysine 99 carries the post-translational modification N6-acetyllysine. 122-125 (NKVD) lines the GTP pocket. Lysine 134 is subject to N6-acetyllysine. Residue lysine 152 forms a Glycyl lysine isopeptide (Lys-Gly) (interchain with G-Cter in SUMO2) linkage. Lysine 159 is modified (N6-acetyllysine; alternate). At lysine 159 the chain carries N6-succinyllysine; alternate.

It belongs to the small GTPase superfamily. Ran family. Testis specific.

It is found in the nucleus. The enzyme catalyses GTP + H2O = GDP + phosphate + H(+). In terms of biological role, GTP-binding protein involved in nucleocytoplasmic transport. Required for the import of protein into the nucleus and also for RNA export. Involved in chromatin condensation and control of cell cycle. This is GTP-binding nuclear protein Ran, testis-specific isoform (Rasl2-9) from Rattus norvegicus (Rat).